A 287-amino-acid polypeptide reads, in one-letter code: O-ureido-serine racemase (287 aa).

N20 provides a ligand contact to substrate. The active-site Proton donor is the C81. Substrate is bound by residues 82–83 (GN), N167, N200, and 218–219 (EY). C227 functions as the Proton acceptor in the catalytic mechanism. 228–229 (GS) provides a ligand contact to substrate.

This sequence belongs to the diaminopimelate epimerase family. As to quaternary structure, monomer.

It is found in the cytoplasm. It catalyses the reaction O-ureido-L-serine = O-ureido-D-serine. With respect to regulation, inhibited by thiol-inactivating reagents such as iodoacetamide and Hg(2+) ions. Its function is as follows. Involved in the biosynthesis of the antibiotic D-cycloserine (DCS), a cyclic structural analog of D-alanine, used as an antitubercular agent. Catalyzes the stereoinversion of O-ureido-L-serine to O-ureido-D-serine. This is O-ureido-serine racemase from Streptomyces lavendulae.